The following is a 798-amino-acid chain: Sodium/hydrogen exchanger 4 (798 aa).

The Cytoplasmic portion of the chain corresponds to 1–13 (MALQMFVTYSPWN). Residues 14–28 (CLLLLVALECSEASS) constitute an intramembrane region (name=A/M1). The Cytoplasmic segment spans residues 29–69 (DLNESANSTAQYASNAWFAAASSEPEEGISVFELDYDYVQI). The segment at residues 70 to 90 (PYEVTLWILLASLAKIGFHLY) is an intramembrane region (name=B/M2). Residues 91–94 (HRLP) are Cytoplasmic-facing. Residues 95 to 115 (GLMPESCLLILVGALVGGIIF) form a helical membrane-spanning segment. Residues 116 to 127 (GTDHKSPPVMDS) are Extracellular-facing. A helical membrane pass occupies residues 128-148 (SIYFLYLLPPIVLEGGYFMPT). Over 149–154 (RPFFEN) the chain is Cytoplasmic. Residues 155–175 (IGSILWWAVLGALINALGIGL) traverse the membrane as a helical segment. At 176–196 (SLYLICQVKAFGLGDVNLLQN) the chain is on the extracellular side. The helical transmembrane segment at 197–217 (LLFGSLISAVDPVAVLAVFEE) threads the bilayer. Over 218-226 (ARVNEQLYM) the chain is Cytoplasmic. A helical transmembrane segment spans residues 227 to 247 (MIFGEALLNDGITVVLYNMLI). Topologically, residues 248–270 (AFTKMHKFEDIETVDILAGCARF) are extracellular. Residues 271-291 (IVVGLGGVLFGIVFGFISAFI) traverse the membrane as a helical segment. Over 292–304 (TRFTQNISAIEPL) the chain is Cytoplasmic. Residues 305–325 (IVFMFSYLSYLAAETLYLSGI) traverse the membrane as a helical segment. Topologically, residues 326 to 356 (LAITACAVTMKKYVEENVSQTSYTTIKYFMK) are extracellular. Asparagine 342 carries N-linked (GlcNAc...) asparagine glycosylation. A helical transmembrane segment spans residues 357 to 373 (MLSSVSETLIFIFMGVS). Residues 374–384 (TVGKNHEWNWA) are Cytoplasmic-facing. A helical transmembrane segment spans residues 385-405 (FICFTLAFCQIWRAISVFALF). The Extracellular segment spans residues 406 to 420 (YISNQFRTFPFSIKD). The name=L intramembrane region spans 421 to 441 (QCIIFYSGVRGAGSFSLAFLL). The Extracellular portion of the chain corresponds to 442 to 450 (PLSLFPRKK). A helical membrane pass occupies residues 451–471 (MFVTATLVVIYFTVFIQGITV). Topologically, residues 472 to 798 (GPLVRYLDVK…RSHSPLLQKK (327 aa)) are cytoplasmic. Disordered stretches follow at residues 662 to 690 (PYGN…GSPS) and 776 to 798 (RWTA…LQKK). Over residues 784–798 (GRDHHRSHSPLLQKK) the composition is skewed to basic residues.

This sequence belongs to the monovalent cation:proton antiporter 1 (CPA1) transporter (TC 2.A.36) family. In terms of assembly, homodimer; each protomer has one site for sodium and one site for proton binding. Interacts with CHP1 and CHP2. In terms of processing, may be phosphorylated.

The protein localises to the basolateral cell membrane. Its subcellular location is the apical cell membrane. It localises to the zymogen granule membrane. The enzyme catalyses Na(+)(in) + H(+)(out) = Na(+)(out) + H(+)(in). It catalyses the reaction Na(+)(out) + NH4(+)(in) = Na(+)(in) + NH4(+)(out). Its function is as follows. Electroneutral antiporter that exchanges sodium for protons or ammonium ions at the basolateral membrane of epithelia to regulate cell volume and intracellular pH upon hypertonic conditions. As part of transcellular ammonia transport in renal tubules, mediates basolateral ammonium extrusion in the medullary thick ascending limb, regulating the corticopapillary ammonium gradient and overall renal acid excretion. Mediates sodium:proton exchange in gastric parietal cells secondary to cAMP-dependent acid secretion and hyperosmolarity. Possibly coupled to chloride:bicarbonate antiporter, enables loading of parietal cells with sodium and chloride ions to maintain cell volume and normal gastric acid secretion. Functions as a sodium sensor in neurons of organum vasculosum of the lamina terminalis where it regulates water intake in response to increased sodium concentration in body fluids. This chain is Sodium/hydrogen exchanger 4 (SLC9A4), found in Homo sapiens (Human).